A 197-amino-acid chain; its full sequence is Small ribosomal subunit protein uS4 (197 aa).

The 63-residue stretch at 88–150 (SRLDNLVYRM…AKSLEIILDN (63 aa)) folds into the S4 RNA-binding domain.

The protein belongs to the universal ribosomal protein uS4 family. Part of the 30S ribosomal subunit. Contacts protein S5. The interaction surface between S4 and S5 is involved in control of translational fidelity.

One of the primary rRNA binding proteins, it binds directly to 16S rRNA where it nucleates assembly of the body of the 30S subunit. Functionally, with S5 and S12 plays an important role in translational accuracy. The protein is Small ribosomal subunit protein uS4 of Azobacteroides pseudotrichonymphae genomovar. CFP2.